A 208-amino-acid polypeptide reads, in one-letter code: Uracil phosphoribosyltransferase (208 aa).

5-phospho-alpha-D-ribose 1-diphosphate contacts are provided by residues R78, R103, and 130-138; that span reads DPMLATGGS. Uracil contacts are provided by residues I193 and 198 to 200; that span reads GDA. D199 is a 5-phospho-alpha-D-ribose 1-diphosphate binding site.

This sequence belongs to the UPRTase family. Mg(2+) is required as a cofactor.

It carries out the reaction UMP + diphosphate = 5-phospho-alpha-D-ribose 1-diphosphate + uracil. It participates in pyrimidine metabolism; UMP biosynthesis via salvage pathway; UMP from uracil: step 1/1. Its activity is regulated as follows. Allosterically activated by GTP. Functionally, catalyzes the conversion of uracil and 5-phospho-alpha-D-ribose 1-diphosphate (PRPP) to UMP and diphosphate. The polypeptide is Uracil phosphoribosyltransferase (Haemophilus influenzae (strain PittEE)).